Reading from the N-terminus, the 211-residue chain is Protein TMA23 (211 aa).

The interval 115–211 is disordered; the sequence is ASFVVSSASS…SARRDRKEHI (97 aa). A compositionally biased stretch (low complexity) spans 116–125; that stretch reads SFVVSSASSS. Composition is skewed to basic residues over residues 140–149, 158–176, and 185–197; these read VKRKKLKKDK, KKKKKKKSKKESKKGKKSK, and SKHKKSKKSKKHK. Residues 198–211 are compositionally biased toward basic and acidic residues; it reads KEESSARRDRKEHI.

As to quaternary structure, forms homooligomers. Associates with ribosomal complexes.

The protein localises to the nucleus. Its subcellular location is the nucleolus. Its function is as follows. Trans-acting factors of the ribosome biogenesis process. This is Protein TMA23 (TMA23) from Saccharomyces cerevisiae (strain ATCC 204508 / S288c) (Baker's yeast).